Reading from the N-terminus, the 271-residue chain is Phosphate import ATP-binding protein PstB 3 (271 aa).

The region spanning 20–266 (LRVEGLGFYY…PQETQTRDYV (247 aa)) is the ABC transporter domain. 52–59 (GPSGCGKS) serves as a coordination point for ATP.

Belongs to the ABC transporter superfamily. Phosphate importer (TC 3.A.1.7) family. As to quaternary structure, the complex is composed of two ATP-binding proteins (PstB), two transmembrane proteins (PstC and PstA) and a solute-binding protein (PstS).

The protein localises to the cell inner membrane. The enzyme catalyses phosphate(out) + ATP + H2O = ADP + 2 phosphate(in) + H(+). Its function is as follows. Part of the ABC transporter complex PstSACB involved in phosphate import. Responsible for energy coupling to the transport system. In Synechocystis sp. (strain ATCC 27184 / PCC 6803 / Kazusa), this protein is Phosphate import ATP-binding protein PstB 3.